Here is a 638-residue protein sequence, read N- to C-terminus: 1-deoxy-D-xylulose-5-phosphate synthase (638 aa).

Residues H72 and 113-115 (GHA) contribute to the thiamine diphosphate site. D144 contacts Mg(2+). Thiamine diphosphate-binding positions include 145–146 (GA), N174, Y289, and E372. N174 lines the Mg(2+) pocket.

The protein belongs to the transketolase family. DXPS subfamily. In terms of assembly, homodimer. The cofactor is Mg(2+). It depends on thiamine diphosphate as a cofactor.

It carries out the reaction D-glyceraldehyde 3-phosphate + pyruvate + H(+) = 1-deoxy-D-xylulose 5-phosphate + CO2. Its pathway is metabolic intermediate biosynthesis; 1-deoxy-D-xylulose 5-phosphate biosynthesis; 1-deoxy-D-xylulose 5-phosphate from D-glyceraldehyde 3-phosphate and pyruvate: step 1/1. Catalyzes the acyloin condensation reaction between C atoms 2 and 3 of pyruvate and glyceraldehyde 3-phosphate to yield 1-deoxy-D-xylulose-5-phosphate (DXP). The protein is 1-deoxy-D-xylulose-5-phosphate synthase of Gloeobacter violaceus (strain ATCC 29082 / PCC 7421).